The following is a 176-amino-acid chain: Ribosome rescue factor SmrB (176 aa).

The Smr domain occupies 98–173 (LDLHGLTQMQ…GTAAILLLVE (76 aa)).

It belongs to the SmrB family. In terms of assembly, associates with collided ribosomes, but not with correctly translating polysomes.

Acts as a ribosome collision sensor. Detects stalled/collided disomes (pairs of ribosomes where the leading ribosome is stalled and a second ribosome has collided with it) and endonucleolytically cleaves mRNA at the 5' boundary of the stalled ribosome. Stalled/collided disomes form a new interface (primarily via the 30S subunits) that binds SmrB. Cleaved mRNA becomes available for tmRNA ligation, leading to ribosomal subunit dissociation and rescue of stalled ribosomes. The chain is Ribosome rescue factor SmrB from Serratia proteamaculans (strain 568).